The sequence spans 161 residues: Crossover junction endodeoxyribonuclease RuvC (161 aa).

Catalysis depends on residues D7, E67, and D139. D7, E67, and D139 together coordinate Mg(2+).

It belongs to the RuvC family. Homodimer which binds Holliday junction (HJ) DNA. The HJ becomes 2-fold symmetrical on binding to RuvC with unstacked arms; it has a different conformation from HJ DNA in complex with RuvA. In the full resolvosome a probable DNA-RuvA(4)-RuvB(12)-RuvC(2) complex forms which resolves the HJ. Mg(2+) is required as a cofactor.

Its subcellular location is the cytoplasm. It carries out the reaction Endonucleolytic cleavage at a junction such as a reciprocal single-stranded crossover between two homologous DNA duplexes (Holliday junction).. Functionally, the RuvA-RuvB-RuvC complex processes Holliday junction (HJ) DNA during genetic recombination and DNA repair. Endonuclease that resolves HJ intermediates. Cleaves cruciform DNA by making single-stranded nicks across the HJ at symmetrical positions within the homologous arms, yielding a 5'-phosphate and a 3'-hydroxyl group; requires a central core of homology in the junction. The consensus cleavage sequence is 5'-(A/T)TT(C/G)-3'. Cleavage occurs on the 3'-side of the TT dinucleotide at the point of strand exchange. HJ branch migration catalyzed by RuvA-RuvB allows RuvC to scan DNA until it finds its consensus sequence, where it cleaves and resolves the cruciform DNA. In Syntrophotalea carbinolica (strain DSM 2380 / NBRC 103641 / GraBd1) (Pelobacter carbinolicus), this protein is Crossover junction endodeoxyribonuclease RuvC.